The following is a 199-amino-acid chain: Transcriptional regulatory protein DesR (199 aa).

One can recognise a Response regulatory domain in the interval 3–117; that stretch reads SIFIAEDQQM…ELANAIRSVM (115 aa). Asp54 bears the 4-aspartylphosphate mark. The region spanning 131–196 is the HTH luxR-type domain; the sequence is LYSEANPLTD…EAITRSKEKG (66 aa). The H-T-H motif DNA-binding region spans 155–174; the sequence is TKEIAQELSIKSGTVRNYIS.

In terms of processing, phosphorylated by DesK.

It is found in the cytoplasm. Member of the two-component regulatory system DesR/DesK, responsible for cold induction of the des gene coding for the Delta5 acyl-lipid desaturase. This is Transcriptional regulatory protein DesR (desR) from Bacillus subtilis (strain 168).